Here is a 253-residue protein sequence, read N- to C-terminus: Triosephosphate isomerase (253 aa).

Substrate is bound at residue 9–11 (NWK). Histidine 97 acts as the Electrophile in catalysis. Glutamate 169 acts as the Proton acceptor in catalysis. Substrate is bound by residues glycine 175, serine 215, and 236–237 (GG).

Belongs to the triosephosphate isomerase family. Homodimer.

It localises to the cytoplasm. It carries out the reaction D-glyceraldehyde 3-phosphate = dihydroxyacetone phosphate. The protein operates within carbohydrate biosynthesis; gluconeogenesis. It functions in the pathway carbohydrate degradation; glycolysis; D-glyceraldehyde 3-phosphate from glycerone phosphate: step 1/1. Functionally, involved in the gluconeogenesis. Catalyzes stereospecifically the conversion of dihydroxyacetone phosphate (DHAP) to D-glyceraldehyde-3-phosphate (G3P). The sequence is that of Triosephosphate isomerase from Staphylococcus aureus (strain NCTC 8325 / PS 47).